A 492-amino-acid chain; its full sequence is MO25-like protein 3 (492 aa).

The disordered stretch occupies residues 442–492 (SRAGIRFGETRNVKGSPRSRSQSPRPPTGPEPSPRTTSYQNVRFPPEDSSR). A compositionally biased stretch (pro residues) spans 465–474 (PRPPTGPEPS).

This sequence belongs to the Mo25 family.

In Caenorhabditis briggsae, this protein is MO25-like protein 3.